We begin with the raw amino-acid sequence, 474 residues long: Glycogen synthase (474 aa).

Lys-12 serves as a coordination point for ADP-alpha-D-glucose.

This sequence belongs to the glycosyltransferase 1 family. Bacterial/plant glycogen synthase subfamily.

The catalysed reaction is [(1-&gt;4)-alpha-D-glucosyl](n) + ADP-alpha-D-glucose = [(1-&gt;4)-alpha-D-glucosyl](n+1) + ADP + H(+). The protein operates within glycan biosynthesis; glycogen biosynthesis. Its function is as follows. Synthesizes alpha-1,4-glucan chains using ADP-glucose. This is Glycogen synthase from Xanthomonas campestris pv. campestris (strain 8004).